The primary structure comprises 62 residues: Toxin Tb2-II (62 aa).

The LCN-type CS-alpha/beta domain maps to 1–62 (KEGYAMDHEG…KVWDYATNKC (62 aa)). 4 disulfides stabilise this stretch: Cys11-Cys62, Cys15-Cys38, Cys23-Cys43, and Cys27-Cys45.

The protein belongs to the long (4 C-C) scorpion toxin superfamily. Sodium channel inhibitor family. Beta subfamily. As to expression, expressed by the venom gland.

The protein localises to the secreted. Functionally, beta toxins bind voltage-independently at site-4 of sodium channels (Nav) and shift the voltage of activation toward more negative potentials thereby affecting sodium channel activation and promoting spontaneous and repetitive firing. This toxin is active against both mammals and insects. In Tityus bahiensis (Brazilian scorpion), this protein is Toxin Tb2-II.